We begin with the raw amino-acid sequence, 859 residues long: Probable potassium transporter 14 (859 aa).

Residues 1–19 show a composition bias toward gly residues; the sequence is METRSGGSGSASGGGGGGR. Residues 1–69 form a disordered region; it reads METRSGGSGS…SRGGCSDSDD (69 aa). At 1 to 112 the chain is on the cytoplasmic side; that stretch reads METRSGGSGS…RHQEITVGRS (112 aa). Residues 54 to 65 are compositionally biased toward low complexity; that stretch reads PAAASGSRGGCS. A helical membrane pass occupies residues 113–133; sequence IVLAVQTLGVVFGDVGTSPLY. Topologically, residues 134–155 are extracellular; that stretch reads AFDVMFNKYPITSKEDVLGALS. Residues 156–176 form a helical membrane-spanning segment; that stretch reads LVIYTLILIPLLKYTLIALWG. Topologically, residues 177–240 are cytoplasmic; the sequence is NDDGEGGTFA…RLETSSMLKK (64 aa). The helical transmembrane segment at 241-261 threads the bilayer; it reads LLLMLVLFGTSMVIADGVVTP. The Extracellular portion of the chain corresponds to 262 to 275; sequence AMSVMSAVNGLKVG. Residues 276–296 traverse the membrane as a helical segment; the sequence is ISSVNEGEVVMITVAVLIVLF. Over 297–305 the chain is Cytoplasmic; that stretch reads TLQRFGSSK. Residues 306–326 form a helical membrane-spanning segment; the sequence is VALAVGPALFIWFCCLAGIGI. The Extracellular portion of the chain corresponds to 327 to 359; sequence YNMKTYGSAVLQAFNPMYIYYYFERNPTQAWMS. The helical transmembrane segment at 360-380 threads the bilayer; sequence LGGCLLCATGSEAMFADLCYF. Residues 381 to 388 lie on the Cytoplasmic side of the membrane; that stretch reads SVKSVQLT. Residues 389–409 traverse the membrane as a helical segment; the sequence is FVFLVLPCLLLGYLGQAAFLM. Residues 410–417 are Extracellular-facing; the sequence is ENLTENQQ. Asn411 carries an N-linked (GlcNAc...) asparagine glycan. Residues 418–438 form a helical membrane-spanning segment; the sequence is VFFLSIPNQAFWPVVFIAILA. Topologically, residues 439–478 are cytoplasmic; sequence AIIASRTMTTAIFSTIKQATALGCFPRLKIIHTSRSFMGQ. The helical transmembrane segment at 479–499 threads the bilayer; that stretch reads IYIPMMNWFLLVSCLAFVTMF. Residues 500–508 lie on the Extracellular side of the membrane; that stretch reads GSINEIGNA. A helical membrane pass occupies residues 509–531; that stretch reads YGIAELGVMMMTTVLVTIIMLLI. At 532–535 the chain is on the cytoplasmic side; that stretch reads WQIN. A helical transmembrane segment spans residues 536–558; the sequence is IIVVLCFLTLSLGLELIFFSSVL. At 559 to 560 the chain is on the extracellular side; sequence GS. The helical transmembrane segment at 561–581 threads the bilayer; sequence VADGSWVLLVFAAVLYLIMYI. Residues 582-859 lie on the Cytoplasmic side of the membrane; that stretch reads WNYGTKLKYE…MMQVAMQYMV (278 aa). Residues 752 to 772 are disordered; sequence GVPPAEAAGTTEHPTIGSSMS. Residues 763–772 show a composition bias toward polar residues; that stretch reads EHPTIGSSMS.

Belongs to the HAK/KUP transporter (TC 2.A.72.3) family.

It is found in the membrane. Functionally, high-affinity potassium transporter. This is Probable potassium transporter 14 (HAK14) from Oryza sativa subsp. japonica (Rice).